Here is a 114-residue protein sequence, read N- to C-terminus: Protein yippee-like (114 aa).

Residues 14 to 111 form the Yippee domain; sequence RTYSCVHCRA…IELAHMIKEN (98 aa). The Zn(2+) site is built by C18, C21, C74, and C77.

The protein belongs to the yippee family.

Involved in regulating synaptic transmission in presynaptic neurons. In class IV dendritic arborization neurons (nociceptors), involved in regulating activation of their second-order neurons (SONs) and maintaining synaptic contact between nociceptors and their SONs. The protein is Protein yippee-like of Drosophila melanogaster (Fruit fly).